A 626-amino-acid polypeptide reads, in one-letter code: Chaperone protein HtpG (626 aa).

Positions 1–332 (MTNNDTPGMR…TEDLPLNVSR (332 aa)) are a; substrate-binding. The interval 333–546 (EVVQSSKVMA…KDSLDSSMEK (214 aa)) is b. The tract at residues 547–626 (MMKMMHAEMP…ELIEAATMSR (80 aa)) is c.

Belongs to the heat shock protein 90 family. As to quaternary structure, homodimer.

Its subcellular location is the cytoplasm. Its function is as follows. Molecular chaperone. Has ATPase activity. The sequence is that of Chaperone protein HtpG from Chlorobium phaeobacteroides (strain DSM 266 / SMG 266 / 2430).